A 518-amino-acid polypeptide reads, in one-letter code: Trigger factor (518 aa).

Residues 170-255 form the PPIase FKBP-type domain; that stretch reads GDVVVIDFVG…VKGLESPQEA (86 aa). The disordered stretch occupies residues 447-518; that stretch reads EAPAKPAKKA…AKKAAAKKDA (72 aa). Composition is skewed to basic residues over residues 452-468 and 501-518; these read PAKK…KKAA and PAAK…KKDA.

The protein belongs to the FKBP-type PPIase family. Tig subfamily.

Its subcellular location is the cytoplasm. It carries out the reaction [protein]-peptidylproline (omega=180) = [protein]-peptidylproline (omega=0). Functionally, involved in protein export. Acts as a chaperone by maintaining the newly synthesized protein in an open conformation. Functions as a peptidyl-prolyl cis-trans isomerase. The sequence is that of Trigger factor from Maricaulis maris (strain MCS10) (Caulobacter maris).